The chain runs to 416 residues: Phosphoglycerate kinase (416 aa).

Substrate contacts are provided by residues 28-30 (DMN), Arg-44, 65-68 (HQSR), Arg-122, and Arg-162. ATP is bound by residues Glu-337 and 362–365 (GGHI).

It belongs to the phosphoglycerate kinase family. In terms of assembly, monomer.

The protein resides in the cytoplasm. It catalyses the reaction (2R)-3-phosphoglycerate + ATP = (2R)-3-phospho-glyceroyl phosphate + ADP. It participates in carbohydrate degradation; glycolysis; pyruvate from D-glyceraldehyde 3-phosphate: step 2/5. The protein is Phosphoglycerate kinase of Methanosarcina mazei (strain ATCC BAA-159 / DSM 3647 / Goe1 / Go1 / JCM 11833 / OCM 88) (Methanosarcina frisia).